A 550-amino-acid chain; its full sequence is Dihydroxy-acid dehydratase (550 aa).

Mg(2+) is bound at residue Asp-81. Residue Cys-122 coordinates [2Fe-2S] cluster. 2 residues coordinate Mg(2+): Asp-123 and Lys-124. Lys-124 carries the post-translational modification N6-carboxylysine. Cys-194 is a [2Fe-2S] cluster binding site. Glu-442 contributes to the Mg(2+) binding site. The Proton acceptor role is filled by Ser-467.

The protein belongs to the IlvD/Edd family. In terms of assembly, homodimer. [2Fe-2S] cluster is required as a cofactor. Requires Mg(2+) as cofactor.

The catalysed reaction is (2R)-2,3-dihydroxy-3-methylbutanoate = 3-methyl-2-oxobutanoate + H2O. The enzyme catalyses (2R,3R)-2,3-dihydroxy-3-methylpentanoate = (S)-3-methyl-2-oxopentanoate + H2O. Its pathway is amino-acid biosynthesis; L-isoleucine biosynthesis; L-isoleucine from 2-oxobutanoate: step 3/4. It participates in amino-acid biosynthesis; L-valine biosynthesis; L-valine from pyruvate: step 3/4. In terms of biological role, functions in the biosynthesis of branched-chain amino acids. Catalyzes the dehydration of (2R,3R)-2,3-dihydroxy-3-methylpentanoate (2,3-dihydroxy-3-methylvalerate) into 2-oxo-3-methylpentanoate (2-oxo-3-methylvalerate) and of (2R)-2,3-dihydroxy-3-methylbutanoate (2,3-dihydroxyisovalerate) into 2-oxo-3-methylbutanoate (2-oxoisovalerate), the penultimate precursor to L-isoleucine and L-valine, respectively. This chain is Dihydroxy-acid dehydratase, found in Methanoregula boonei (strain DSM 21154 / JCM 14090 / 6A8).